We begin with the raw amino-acid sequence, 929 residues long: Isoleucine--tRNA ligase (929 aa).

A 'HIGH' region motif is present at residues 57–67; that stretch reads PYANGNIHVGH. Glu-554 is a binding site for L-isoleucyl-5'-AMP. The 'KMSKS' region motif lies at 595–599; that stretch reads KMSKS. Lys-598 lines the ATP pocket. Zn(2+) contacts are provided by Cys-888, Cys-891, Cys-908, and Cys-911.

Belongs to the class-I aminoacyl-tRNA synthetase family. IleS type 1 subfamily. As to quaternary structure, monomer. It depends on Zn(2+) as a cofactor.

Its subcellular location is the cytoplasm. It catalyses the reaction tRNA(Ile) + L-isoleucine + ATP = L-isoleucyl-tRNA(Ile) + AMP + diphosphate. Catalyzes the attachment of isoleucine to tRNA(Ile). As IleRS can inadvertently accommodate and process structurally similar amino acids such as valine, to avoid such errors it has two additional distinct tRNA(Ile)-dependent editing activities. One activity is designated as 'pretransfer' editing and involves the hydrolysis of activated Val-AMP. The other activity is designated 'posttransfer' editing and involves deacylation of mischarged Val-tRNA(Ile). This Streptococcus thermophilus (strain ATCC BAA-491 / LMD-9) protein is Isoleucine--tRNA ligase.